Reading from the N-terminus, the 260-residue chain is Transcription repressor OFP13 (260 aa).

The region spanning 150–211 (VAMESEDPYG…VSAFVDLLSG (62 aa)) is the OVATE domain.

In terms of tissue distribution, expressed in roots, rosette and cauline leaves, shoots, stems, flower buds and siliques.

The protein resides in the nucleus. Transcriptional repressor that regulates multiple aspects of plant growth and development through the regulation of BEL1-LIKE (BLH) and KNOX TALE (KNAT) homeodomain transcription factors. The chain is Transcription repressor OFP13 (OFP13) from Arabidopsis thaliana (Mouse-ear cress).